The sequence spans 396 residues: Large ribosomal subunit protein uL24m (396 aa).

The tract at residues 374 to 396 is disordered; that stretch reads QLSLGGGQEDAATTTSPEQPKVV. Residues 384–396 are compositionally biased toward polar residues; the sequence is AATTTSPEQPKVV.

The protein belongs to the universal ribosomal protein uL24 family. Component of the mitochondrial large ribosomal subunit (mt-LSU). Mature N.crassa 74S mitochondrial ribosomes consist of a small (37S) and a large (54S) subunit. The 37S small subunit contains a 16S ribosomal RNA (16S mt-rRNA) and 32 different proteins. The 54S large subunit contains a 23S rRNA (23S mt-rRNA) and 42 different proteins. uL24m forms the wall of the exit tunnel.

It localises to the mitochondrion. Its function is as follows. Component of the mitochondrial ribosome (mitoribosome), a dedicated translation machinery responsible for the synthesis of mitochondrial genome-encoded proteins, including at least some of the essential transmembrane subunits of the mitochondrial respiratory chain. The mitoribosomes are attached to the mitochondrial inner membrane and translation products are cotranslationally integrated into the membrane. The chain is Large ribosomal subunit protein uL24m (mrpl40) from Neurospora crassa (strain ATCC 24698 / 74-OR23-1A / CBS 708.71 / DSM 1257 / FGSC 987).